The primary structure comprises 72 residues: Hypotensin-1 (72 aa).

The N-terminal stretch at 1–24 (MKMMIPVIFSILLLIFSLSSTAMS) is a signal peptide. The propeptide occupies 25 to 35 (LEDEQENMEER). A Phosphoserine modification is found at S41. The tract at residues 53-72 (ETNAKPPARFDPAAFEKSDD) is disordered. Positions 61–72 (RFDPAAFEKSDD) are excised as a propeptide.

Belongs to the non-disulfide-bridged peptide (NDBP) superfamily. Post-translationally, undergoes enzymatic cleavages by carboxypeptidases, endopeptidases, and aminopeptidases resulting in at least 46 fragments of this protein. In terms of tissue distribution, expressed by the venom gland.

The protein resides in the secreted. Its function is as follows. Agonist of the B2 bradykinin receptor (BDKRB2). Potentiates the hypotensive effect of bradykinin (BK) and induces a direct vasorelaxing effect independent of BK, by endothelium- and nitric oxide (NO)-dependent mechanisms in rat aortic ring preparations. Also exerts proangiogenic, antiinflammatory, and antifibrogenic activities. Does not inhibit the angiotensin-converting enzyme (ACE) but increases its activity, and inhibits neprilysin (NEP) in a non-competitive manner. Exerts intermediate cytotoxicity and pro-inflammatory effects on mouse macrophages, and increases the phagocytic activity of these murine cells. Functionally, presents moderate hemolytic activity at physiological concentrations (micromolar range). Does not induce mast cell degranulation, lactate dehydrogenase (LDH) release from mast cells and antimicrobial effects. In vivo, causes intense pain (but no edema formation), when injected in mice hind paws. Also induces discomfort and anxiety in mice, as it moderately diminishes locomotion and moderately increases rearing behavior. The polypeptide is Hypotensin-1 (Tityus serrulatus (Brazilian scorpion)).